Consider the following 160-residue polypeptide: NADH-quinone oxidoreductase subunit B (160 aa).

The [4Fe-4S] cluster site is built by Cys-39, Cys-40, Cys-104, and Cys-135.

This sequence belongs to the complex I 20 kDa subunit family. In terms of assembly, NDH-1 is composed of 14 different subunits. Subunits NuoB, C, D, E, F, and G constitute the peripheral sector of the complex. It depends on [4Fe-4S] cluster as a cofactor.

The protein localises to the cell membrane. It carries out the reaction a quinone + NADH + 5 H(+)(in) = a quinol + NAD(+) + 4 H(+)(out). In terms of biological role, NDH-1 shuttles electrons from NADH, via FMN and iron-sulfur (Fe-S) centers, to quinones in the respiratory chain. The immediate electron acceptor for the enzyme in this species is believed to be a menaquinone. Couples the redox reaction to proton translocation (for every two electrons transferred, four hydrogen ions are translocated across the cytoplasmic membrane), and thus conserves the redox energy in a proton gradient. The chain is NADH-quinone oxidoreductase subunit B from Amoebophilus asiaticus (strain 5a2).